The chain runs to 373 residues: S-adenosylmethionine:tRNA ribosyltransferase-isomerase (373 aa).

It belongs to the QueA family. Monomer.

The protein resides in the cytoplasm. The catalysed reaction is 7-aminomethyl-7-carbaguanosine(34) in tRNA + S-adenosyl-L-methionine = epoxyqueuosine(34) in tRNA + adenine + L-methionine + 2 H(+). The protein operates within tRNA modification; tRNA-queuosine biosynthesis. In terms of biological role, transfers and isomerizes the ribose moiety from AdoMet to the 7-aminomethyl group of 7-deazaguanine (preQ1-tRNA) to give epoxyqueuosine (oQ-tRNA). This chain is S-adenosylmethionine:tRNA ribosyltransferase-isomerase, found in Caulobacter sp. (strain K31).